The chain runs to 351 residues: UPF0104 membrane protein MTH_887 (351 aa).

Helical transmembrane passes span 20 to 40, 51 to 71, 137 to 157, 165 to 185, 244 to 264, 275 to 295, 304 to 324, and 328 to 348; these read IVLS…FAGF, SPYF…LWTL, VFEF…IMTW, IVVS…VYAG, FVIG…RLYV, AVPL…PILP, ILVG…AASV, and IASY…YGKQ.

This sequence belongs to the UPF0104 family.

Its subcellular location is the cell membrane. The polypeptide is UPF0104 membrane protein MTH_887 (Methanothermobacter thermautotrophicus (strain ATCC 29096 / DSM 1053 / JCM 10044 / NBRC 100330 / Delta H) (Methanobacterium thermoautotrophicum)).